The sequence spans 122 residues: Large ribosomal subunit protein uL14 (122 aa).

The protein belongs to the universal ribosomal protein uL14 family. In terms of assembly, part of the 50S ribosomal subunit. Forms a cluster with proteins L3 and L19. In the 70S ribosome, L14 and L19 interact and together make contacts with the 16S rRNA in bridges B5 and B8.

In terms of biological role, binds to 23S rRNA. Forms part of two intersubunit bridges in the 70S ribosome. The protein is Large ribosomal subunit protein uL14 of Mesomycoplasma hyopneumoniae (strain 232) (Mycoplasma hyopneumoniae).